A 154-amino-acid polypeptide reads, in one-letter code: Deoxyuridine 5'-triphosphate nucleotidohydrolase (154 aa).

Residues 72–74 (RSG), N85, 89–91 (LID), and M99 contribute to the substrate site.

The protein belongs to the dUTPase family. Mg(2+) is required as a cofactor.

It catalyses the reaction dUTP + H2O = dUMP + diphosphate + H(+). It functions in the pathway pyrimidine metabolism; dUMP biosynthesis; dUMP from dCTP (dUTP route): step 2/2. Its function is as follows. This enzyme is involved in nucleotide metabolism: it produces dUMP, the immediate precursor of thymidine nucleotides and it decreases the intracellular concentration of dUTP so that uracil cannot be incorporated into DNA. The sequence is that of Deoxyuridine 5'-triphosphate nucleotidohydrolase from Psychrobacter cryohalolentis (strain ATCC BAA-1226 / DSM 17306 / VKM B-2378 / K5).